A 422-amino-acid polypeptide reads, in one-letter code: Elongation factor 1-gamma (422 aa).

The GST N-terminal domain occupies 1–82 (MALVLHAGKT…YVARLKADNP (82 aa)). The GST C-terminal domain maps to 87–215 (SLIDYAHIEQ…VKQTESVPPV (129 aa)). Positions 210–269 (ESVPPVPSAKKPSQPKETKSKAKEEPKKEAKKEPAKPKAEAAEEVEEAPKPKPKNPLDLL) are disordered. The segment covering 223-250 (QPKETKSKAKEEPKKEAKKEPAKPKAEA) has biased composition (basic and acidic residues). The EF-1-gamma C-terminal domain maps to 262–422 (PKNPLDLLPP…EALLDAKCFK (161 aa)).

In terms of assembly, EF-1 is composed of four subunits: alpha, beta, delta, and gamma.

Functionally, probably plays a role in anchoring the complex to other cellular components. The polypeptide is Elongation factor 1-gamma (Prunus avium (Cherry)).